A 201-amino-acid polypeptide reads, in one-letter code: Recombination protein RecR (201 aa).

The C4-type zinc-finger motif lies at 57-72 (CADCRTFTEQEVCNIC). The Toprim domain occupies 81-176 (GQICVVESPA…EASRIAHGVP (96 aa)).

It belongs to the RecR family.

Functionally, may play a role in DNA repair. It seems to be involved in an RecBC-independent recombinational process of DNA repair. It may act with RecF and RecO. The polypeptide is Recombination protein RecR (Shigella boydii serotype 4 (strain Sb227)).